A 311-amino-acid chain; its full sequence is tRNA pseudouridine synthase B (311 aa).

D52 (nucleophile) is an active-site residue.

The protein belongs to the pseudouridine synthase TruB family. Type 1 subfamily.

The catalysed reaction is uridine(55) in tRNA = pseudouridine(55) in tRNA. Responsible for synthesis of pseudouridine from uracil-55 in the psi GC loop of transfer RNAs. The polypeptide is tRNA pseudouridine synthase B (Burkholderia mallei (strain ATCC 23344)).